The chain runs to 280 residues: Ribosomal protein L11 methyltransferase (280 aa).

S-adenosyl-L-methionine contacts are provided by T130, G151, D172, and N213.

The protein belongs to the methyltransferase superfamily. PrmA family.

Its subcellular location is the cytoplasm. It carries out the reaction L-lysyl-[protein] + 3 S-adenosyl-L-methionine = N(6),N(6),N(6)-trimethyl-L-lysyl-[protein] + 3 S-adenosyl-L-homocysteine + 3 H(+). Its function is as follows. Methylates ribosomal protein L11. This Nitratiruptor sp. (strain SB155-2) protein is Ribosomal protein L11 methyltransferase.